We begin with the raw amino-acid sequence, 207 residues long: Holliday junction branch migration complex subunit RuvA (207 aa).

The domain I stretch occupies residues 1-64 (MISYIKGELA…EDECSLFGFL (64 aa)). Residues 65–143 (TRDDLSMFKM…LDEVFESALS (79 aa)) form a domain II region. Residues 144–155 (KNKKADNNSNVS) form a flexible linker region. Residues 156-207 (NVMMIRNDAVEALVSLGYSSKDALVAVKEVEDIENKDSETVLKEALKKLVKF) are domain III.

Belongs to the RuvA family. In terms of assembly, homotetramer. Forms an RuvA(8)-RuvB(12)-Holliday junction (HJ) complex. HJ DNA is sandwiched between 2 RuvA tetramers; dsDNA enters through RuvA and exits via RuvB. An RuvB hexamer assembles on each DNA strand where it exits the tetramer. Each RuvB hexamer is contacted by two RuvA subunits (via domain III) on 2 adjacent RuvB subunits; this complex drives branch migration. In the full resolvosome a probable DNA-RuvA(4)-RuvB(12)-RuvC(2) complex forms which resolves the HJ.

It is found in the cytoplasm. In terms of biological role, the RuvA-RuvB-RuvC complex processes Holliday junction (HJ) DNA during genetic recombination and DNA repair, while the RuvA-RuvB complex plays an important role in the rescue of blocked DNA replication forks via replication fork reversal (RFR). RuvA specifically binds to HJ cruciform DNA, conferring on it an open structure. The RuvB hexamer acts as an ATP-dependent pump, pulling dsDNA into and through the RuvAB complex. HJ branch migration allows RuvC to scan DNA until it finds its consensus sequence, where it cleaves and resolves the cruciform DNA. This chain is Holliday junction branch migration complex subunit RuvA, found in Lachnospira eligens (strain ATCC 27750 / DSM 3376 / VPI C15-48 / C15-B4) (Eubacterium eligens).